The chain runs to 190 residues: Myophilin (190 aa).

The tract at residues 1–23 (MSNVPPPSGLSYQVKKKLEGKRD) is disordered. Residues 24–130 (KDQENEALEW…RTLFALGRTC (107 aa)) form the Calponin-homology (CH) domain. One copy of the Calponin-like repeat lies at 165–189 (VSLQYGSNKGASQAGINMGKQRMIM).

It belongs to the calponin family. In terms of tissue distribution, muscle specific.

This is Myophilin from Echinococcus granulosus (Hydatid tapeworm).